Consider the following 137-residue polypeptide: MLQPKRTKFRKQMTGHNRGLALRGSKVSFGEFALKAVARGRLTARQIESARRALTRHVKRGGKIWIRVFPDKPVTKKPLEVRMGKGKGSVEYWVAQIQPGKVLYEIEGVSEELAREAFALAAAKLPLATSFVKRTVM.

This sequence belongs to the universal ribosomal protein uL16 family. Part of the 50S ribosomal subunit.

Functionally, binds 23S rRNA and is also seen to make contacts with the A and possibly P site tRNAs. The chain is Large ribosomal subunit protein uL16 from Pseudomonas entomophila (strain L48).